The sequence spans 334 residues: Glutaminase (334 aa).

Substrate contacts are provided by Ser76, Asn126, Glu170, Asn177, Tyr201, Tyr253, and Val271.

This sequence belongs to the glutaminase family. Homotetramer.

It catalyses the reaction L-glutamine + H2O = L-glutamate + NH4(+). This chain is Glutaminase, found in Nostoc sp. (strain PCC 7120 / SAG 25.82 / UTEX 2576).